The sequence spans 1246 residues: DNA-directed RNA polymerase subunit beta (1246 aa).

Residues I1171–A1246 are disordered. Composition is skewed to acidic residues over residues D1202–E1223 and E1230–G1240.

The protein belongs to the RNA polymerase beta chain family. As to quaternary structure, the RNAP catalytic core consists of 2 alpha, 1 beta, 1 beta' and 1 omega subunit. When a sigma factor is associated with the core the holoenzyme is formed, which can initiate transcription.

It catalyses the reaction RNA(n) + a ribonucleoside 5'-triphosphate = RNA(n+1) + diphosphate. Its function is as follows. DNA-dependent RNA polymerase catalyzes the transcription of DNA into RNA using the four ribonucleoside triphosphates as substrates. The protein is DNA-directed RNA polymerase subunit beta of Alkaliphilus metalliredigens (strain QYMF).